Consider the following 257-residue polypeptide: Imidazole glycerol phosphate synthase subunit HisF (257 aa).

Catalysis depends on residues D11 and D130.

Belongs to the HisA/HisF family. As to quaternary structure, heterodimer of HisH and HisF.

Its subcellular location is the cytoplasm. The catalysed reaction is 5-[(5-phospho-1-deoxy-D-ribulos-1-ylimino)methylamino]-1-(5-phospho-beta-D-ribosyl)imidazole-4-carboxamide + L-glutamine = D-erythro-1-(imidazol-4-yl)glycerol 3-phosphate + 5-amino-1-(5-phospho-beta-D-ribosyl)imidazole-4-carboxamide + L-glutamate + H(+). It participates in amino-acid biosynthesis; L-histidine biosynthesis; L-histidine from 5-phospho-alpha-D-ribose 1-diphosphate: step 5/9. Its function is as follows. IGPS catalyzes the conversion of PRFAR and glutamine to IGP, AICAR and glutamate. The HisF subunit catalyzes the cyclization activity that produces IGP and AICAR from PRFAR using the ammonia provided by the HisH subunit. This chain is Imidazole glycerol phosphate synthase subunit HisF, found in Aeromonas salmonicida (strain A449).